The following is a 206-amino-acid chain: Two-component response regulator ARR7 (206 aa).

The region spanning histidine 25–methionine 152 is the Response regulatory domain. Aspartate 85 bears the 4-aspartylphosphate mark. The interval serine 165 to leucine 206 is disordered.

Belongs to the ARR family. Type-A subfamily. Post-translationally, two-component system major event consists of a His-to-Asp phosphorelay between a sensor histidine kinase (HK) and a response regulator (RR). In plants, the His-to-Asp phosphorelay involves an additional intermediate named Histidine-containing phosphotransfer protein (HPt). This multistep phosphorelay consists of a His-Asp-His-Asp sequential transfer of a phosphate group between first a His and an Asp of the HK protein, followed by the transfer to a conserved His of the HPt protein and finally the transfer to an Asp in the receiver domain of the RR protein. As to expression, predominantly expressed in roots and young flowers.

The protein localises to the nucleus. Its function is as follows. Functions as a response regulator involved in His-to-Asp phosphorelay signal transduction system. Phosphorylation of the Asp residue in the receiver domain activates the ability of the protein to promote the transcription of target genes. Type-A response regulators seem to act as negative regulators of the cytokinin signaling. The sequence is that of Two-component response regulator ARR7 (ARR7) from Arabidopsis thaliana (Mouse-ear cress).